Here is a 331-residue protein sequence, read N- to C-terminus: Phosphoribosylformylglycinamidine cyclo-ligase (331 aa).

The protein belongs to the AIR synthase family.

The protein resides in the cytoplasm. It carries out the reaction 2-formamido-N(1)-(5-O-phospho-beta-D-ribosyl)acetamidine + ATP = 5-amino-1-(5-phospho-beta-D-ribosyl)imidazole + ADP + phosphate + H(+). It functions in the pathway purine metabolism; IMP biosynthesis via de novo pathway; 5-amino-1-(5-phospho-D-ribosyl)imidazole from N(2)-formyl-N(1)-(5-phospho-D-ribosyl)glycinamide: step 2/2. The protein is Phosphoribosylformylglycinamidine cyclo-ligase of Clostridium botulinum (strain Loch Maree / Type A3).